Here is a 307-residue protein sequence, read N- to C-terminus: Salivary glue protein Sgs-3 (307 aa).

An N-terminal signal peptide occupies residues 1–23; the sequence is MKLTIATALASILLIGSANVANC. Residues 56 to 257 are disordered; sequence APPTQQSTTQ…PTTTKPTTPK (202 aa).

In terms of processing, O-glycosylated by Pgnat9 in salivary glands. Specifically expressed in the salivary gland.

The protein resides in the secreted. The sequence is that of Salivary glue protein Sgs-3 from Drosophila melanogaster (Fruit fly).